A 438-amino-acid polypeptide reads, in one-letter code: Serine hydroxymethyltransferase (438 aa).

(6S)-5,6,7,8-tetrahydrofolate contacts are provided by residues leucine 135 and 139-141 (GHL). Position 244 is an N6-(pyridoxal phosphate)lysine (lysine 244). Residues 361–383 (GVPNDPLPPVKTSGIRVGSPAGT) form a disordered region.

It belongs to the SHMT family. As to quaternary structure, homodimer. Pyridoxal 5'-phosphate serves as cofactor.

The protein localises to the cytoplasm. It catalyses the reaction (6R)-5,10-methylene-5,6,7,8-tetrahydrofolate + glycine + H2O = (6S)-5,6,7,8-tetrahydrofolate + L-serine. Its pathway is one-carbon metabolism; tetrahydrofolate interconversion. It participates in amino-acid biosynthesis; glycine biosynthesis; glycine from L-serine: step 1/1. Functionally, catalyzes the reversible interconversion of serine and glycine with tetrahydrofolate (THF) serving as the one-carbon carrier. This reaction serves as the major source of one-carbon groups required for the biosynthesis of purines, thymidylate, methionine, and other important biomolecules. Also exhibits THF-independent aldolase activity toward beta-hydroxyamino acids, producing glycine and aldehydes, via a retro-aldol mechanism. This is Serine hydroxymethyltransferase from Rhizorhabdus wittichii (strain DSM 6014 / CCUG 31198 / JCM 15750 / NBRC 105917 / EY 4224 / RW1) (Sphingomonas wittichii).